Consider the following 425-residue polypeptide: MLSRICGNGIRLTRTRLQFQPSIVTFRDYSNPAPKRGFLNNLIDNVRDEMQKNKELQEHQQQLKARMQELNESDALKDARKKFEIVEKETLKSSEVVKQKIEELSDHMKKMVHEIQKTEAGKKMTEAGAEALKQARKAAEHVEKVAEKVGDTEVYKHVSTSMKTVKDEIDNIADVRMYSRPEALTKRTDGFDLEKERVVEANDSATDVTLHKDSKWYSGWKNFSESNTYYHKLLDWKIKYDESDNMAVRMMRGVTEKIGSVFSGQNEVSEVLTEIHKIDANFDKQEWLRFCETKIIPNILEAFIRFDLEVLQSWCHERAYTQLSTVVKEYQKMHFSTKDSRIIDINKVEMATGKMMEQGPVLIISFQVYMINVTKNADGKVVEGDPDNPKRINHIWVLCRDVEEYNPALAWKLLEVHMQETPLAL.

Positions 38-149 form a coiled coil; the sequence is FLNNLIDNVR…EHVEKVAEKV (112 aa).

It belongs to the Tim44 family. In terms of assembly, probable component of the PAM complex at least composed of a mitochondrial HSP70 protein, GrpE, tin-44, tim-16 and tim-14/dnj-21. The complex interacts with the tim-23 component of the TIM23 complex.

It localises to the mitochondrion inner membrane. Essential component of the PAM complex, a complex required for the translocation of transit peptide-containing proteins from the inner membrane into the mitochondrial matrix in an ATP-dependent manner. Recruits mitochondrial HSP70 to drive protein translocation into the matrix using ATP as an energy source. This chain is Probable mitochondrial import inner membrane translocase subunit tin-44, found in Caenorhabditis elegans.